The sequence spans 254 residues: UPF0246 protein BDI_1226 (254 aa).

Belongs to the UPF0246 family.

The protein is UPF0246 protein BDI_1226 of Parabacteroides distasonis (strain ATCC 8503 / DSM 20701 / CIP 104284 / JCM 5825 / NCTC 11152).